The chain runs to 172 residues: Putative acetyltransferase YvoF (172 aa).

This sequence belongs to the transferase hexapeptide repeat family.

In Bacillus subtilis (strain 168), this protein is Putative acetyltransferase YvoF (yvoF).